Reading from the N-terminus, the 518-residue chain is Bifunctional purine biosynthesis protein PurH (518 aa).

In terms of domain architecture, MGS-like spans 1–146; the sequence is MSPIALLSVS…KNHQDVLVVT (146 aa).

This sequence belongs to the PurH family.

It carries out the reaction (6R)-10-formyltetrahydrofolate + 5-amino-1-(5-phospho-beta-D-ribosyl)imidazole-4-carboxamide = 5-formamido-1-(5-phospho-D-ribosyl)imidazole-4-carboxamide + (6S)-5,6,7,8-tetrahydrofolate. The catalysed reaction is IMP + H2O = 5-formamido-1-(5-phospho-D-ribosyl)imidazole-4-carboxamide. It participates in purine metabolism; IMP biosynthesis via de novo pathway; 5-formamido-1-(5-phospho-D-ribosyl)imidazole-4-carboxamide from 5-amino-1-(5-phospho-D-ribosyl)imidazole-4-carboxamide (10-formyl THF route): step 1/1. It functions in the pathway purine metabolism; IMP biosynthesis via de novo pathway; IMP from 5-formamido-1-(5-phospho-D-ribosyl)imidazole-4-carboxamide: step 1/1. This chain is Bifunctional purine biosynthesis protein PurH, found in Prochlorococcus marinus (strain NATL1A).